Reading from the N-terminus, the 594-residue chain is Arginine--tRNA ligase (594 aa).

Residues 139–149 carry the 'HIGH' region motif; that stretch reads ANPTGPLHVGH.

This sequence belongs to the class-I aminoacyl-tRNA synthetase family. Monomer.

The protein resides in the cytoplasm. The enzyme catalyses tRNA(Arg) + L-arginine + ATP = L-arginyl-tRNA(Arg) + AMP + diphosphate. This is Arginine--tRNA ligase from Burkholderia thailandensis (strain ATCC 700388 / DSM 13276 / CCUG 48851 / CIP 106301 / E264).